We begin with the raw amino-acid sequence, 136 residues long: Histone H3 (136 aa).

The interval 1–43 (MARTKQTARKSTGGKAPRKQLASKAARKSAPSTGGVKKPHRYK) is disordered. Lysine 5 is subject to N6,N6,N6-trimethyllysine; alternate. At lysine 5 the chain carries N6,N6-dimethyllysine; alternate. Lysine 5 and lysine 10 each carry N6-methyllysine; alternate. Lysine 10 bears the N6-acetyllysine; alternate mark. A Phosphoserine modification is found at serine 11. Residue lysine 15 is modified to N6,N6-dimethyllysine; alternate. N6-acetyllysine; alternate is present on residues lysine 15, lysine 19, lysine 24, lysine 28, and lysine 37. Residues lysine 19, lysine 24, lysine 28, and lysine 37 each carry the N6-methyllysine; alternate modification. N6,N6,N6-trimethyllysine; alternate occurs at positions 28 and 37. An N6,N6-dimethyllysine; alternate mark is found at lysine 28 and lysine 37. Lysine 57 and lysine 65 each carry N6-acetyllysine. Lysine 80 is modified (N6,N6,N6-trimethyllysine; alternate). At lysine 80 the chain carries N6,N6-dimethyllysine; alternate. Lysine 80 bears the N6-methyllysine; alternate mark.

The protein belongs to the histone H3 family. The nucleosome is a histone octamer containing two molecules each of H2A, H2B, H3 and H4 assembled in one H3-H4 heterotetramer and two H2A-H2B heterodimers. The octamer wraps approximately 147 bp of DNA. Post-translationally, phosphorylated to form H3S10ph. H3S10ph promotes subsequent H3K14ac formation and is required for transcriptional activation through TBP recruitment to the promoters. In terms of processing, mono-, di- and trimethylated by the COMPASS complex to form H3K4me1/2/3. H3K4me activates gene expression by regulating transcription elongation and plays a role in telomere length maintenance. H3K4me enrichment correlates with transcription levels, and occurs in a 5' to 3' gradient with H3K4me3 enrichment at the 5'-end of genes, shifting to H3K4me2 and then H3K4me1. Methylated by SET2 to form H3K36me. H3K36me represses gene expression. Methylated by DOT1 to form H3K79me. H3K79me is required for association of SIR proteins with telomeric regions and for telomeric silencing. The COMPASS-mediated formation of H3K4me2/3 and the DOT1-mediated formation of H3K79me require H2BK123ub1. Acetylation of histone H3 leads to transcriptional activation. H3K14ac formation by GCN5 is promoted by H3S10ph. H3K14ac can also be formed by ESA1. H3K56ac formation occurs predominantly in newly synthesized H3 molecules during G1, S and G2/M of the cell cycle and may be involved in DNA repair.

The protein localises to the nucleus. It is found in the chromosome. Functionally, core component of nucleosome. Nucleosomes wrap and compact DNA into chromatin, limiting DNA accessibility to the cellular machineries which require DNA as a template. Histones thereby play a central role in transcription regulation, DNA repair, DNA replication and chromosomal stability. DNA accessibility is regulated via a complex set of post-translational modifications of histones, also called histone code, and nucleosome remodeling. The protein is Histone H3 (HHT1) of Phaeosphaeria nodorum (strain SN15 / ATCC MYA-4574 / FGSC 10173) (Glume blotch fungus).